The chain runs to 146 residues: Acidic phospholipase A2 C (146 aa).

A signal peptide spans 1–21 (MNPAHLLILAAVCVSPLGASS). Residues 22 to 27 (NRPMPL) constitute a propeptide that is removed on maturation. 7 cysteine pairs are disulfide-bonded: cysteine 38–cysteine 98, cysteine 53–cysteine 145, cysteine 55–cysteine 71, cysteine 70–cysteine 126, cysteine 77–cysteine 119, cysteine 87–cysteine 112, and cysteine 105–cysteine 117. Ca(2+)-binding residues include tyrosine 54, glycine 56, and glycine 58. Histidine 74 is an active-site residue. A Ca(2+)-binding site is contributed by aspartate 75. Aspartate 120 is an active-site residue.

This sequence belongs to the phospholipase A2 family. Group I subfamily. D49 sub-subfamily. Ca(2+) is required as a cofactor. In terms of tissue distribution, expressed by the venom gland.

It is found in the secreted. It carries out the reaction a 1,2-diacyl-sn-glycero-3-phosphocholine + H2O = a 1-acyl-sn-glycero-3-phosphocholine + a fatty acid + H(+). Functionally, PLA2 catalyzes the calcium-dependent hydrolysis of the 2-acyl groups in 3-sn-phosphoglycerides. The chain is Acidic phospholipase A2 C from Naja sputatrix (Malayan spitting cobra).